The chain runs to 217 residues: Thiamine-phosphate synthase (217 aa).

Residues 42–46 and D77 each bind 4-amino-2-methyl-5-(diphosphooxymethyl)pyrimidine; that span reads QYRDK. 2 residues coordinate Mg(2+): D78 and D97. A 4-amino-2-methyl-5-(diphosphooxymethyl)pyrimidine-binding site is contributed by S116. Residue 143–145 coordinates 2-[(2R,5Z)-2-carboxy-4-methylthiazol-5(2H)-ylidene]ethyl phosphate; it reads TTS. K146 lines the 4-amino-2-methyl-5-(diphosphooxymethyl)pyrimidine pocket. Residues G174 and 194 to 195 each bind 2-[(2R,5Z)-2-carboxy-4-methylthiazol-5(2H)-ylidene]ethyl phosphate; that span reads IS.

It belongs to the thiamine-phosphate synthase family. Mg(2+) serves as cofactor.

It carries out the reaction 2-[(2R,5Z)-2-carboxy-4-methylthiazol-5(2H)-ylidene]ethyl phosphate + 4-amino-2-methyl-5-(diphosphooxymethyl)pyrimidine + 2 H(+) = thiamine phosphate + CO2 + diphosphate. The enzyme catalyses 2-(2-carboxy-4-methylthiazol-5-yl)ethyl phosphate + 4-amino-2-methyl-5-(diphosphooxymethyl)pyrimidine + 2 H(+) = thiamine phosphate + CO2 + diphosphate. The catalysed reaction is 4-methyl-5-(2-phosphooxyethyl)-thiazole + 4-amino-2-methyl-5-(diphosphooxymethyl)pyrimidine + H(+) = thiamine phosphate + diphosphate. It participates in cofactor biosynthesis; thiamine diphosphate biosynthesis; thiamine phosphate from 4-amino-2-methyl-5-diphosphomethylpyrimidine and 4-methyl-5-(2-phosphoethyl)-thiazole: step 1/1. Functionally, condenses 4-methyl-5-(beta-hydroxyethyl)thiazole monophosphate (THZ-P) and 2-methyl-4-amino-5-hydroxymethyl pyrimidine pyrophosphate (HMP-PP) to form thiamine monophosphate (TMP). This chain is Thiamine-phosphate synthase, found in Lactiplantibacillus plantarum (strain ATCC BAA-793 / NCIMB 8826 / WCFS1) (Lactobacillus plantarum).